The primary structure comprises 291 residues: Beta-lactamase Toho-1 (291 aa).

A signal peptide spans 1-29 (MMTQSIRRSMLTVMATLPLLFSSATLHAQ). The Acyl-ester intermediate role is filled by serine 73. 237–239 (KTG) is a binding site for substrate.

The protein belongs to the class-A beta-lactamase family. In terms of assembly, monomer.

It carries out the reaction a beta-lactam + H2O = a substituted beta-amino acid. Has strong cefotaxime-hydrolyzing activity. The protein is Beta-lactamase Toho-1 (bla) of Escherichia coli.